The sequence spans 216 residues: Octanoyltransferase (216 aa).

The 180-residue stretch at 32 to 211 (QEASEMLWFL…RFPYFLEALQ (180 aa)) folds into the BPL/LPL catalytic domain. Residues 71–78 (RGGRYTYH), 142–144 (AIG), and 155–157 (GFS) contribute to the substrate site. Residue cysteine 173 is the Acyl-thioester intermediate of the active site.

Belongs to the LipB family.

The protein localises to the cytoplasm. The enzyme catalyses octanoyl-[ACP] + L-lysyl-[protein] = N(6)-octanoyl-L-lysyl-[protein] + holo-[ACP] + H(+). It participates in protein modification; protein lipoylation via endogenous pathway; protein N(6)-(lipoyl)lysine from octanoyl-[acyl-carrier-protein]: step 1/2. Catalyzes the transfer of endogenously produced octanoic acid from octanoyl-acyl-carrier-protein onto the lipoyl domains of lipoate-dependent enzymes. Lipoyl-ACP can also act as a substrate although octanoyl-ACP is likely to be the physiological substrate. In Zymomonas mobilis subsp. mobilis (strain ATCC 31821 / ZM4 / CP4), this protein is Octanoyltransferase.